The primary structure comprises 284 residues: Putative mitochondrial carrier protein PET8 (284 aa).

3 Solcar repeats span residues 2 to 75 (NTFF…MKVK), 92 to 178 (IDTT…LKKT), and 192 to 271 (KGAI…VHSL). 6 helical membrane passes run 5–25 (FLSL…FFPI), 50–70 (GLGS…ISYD), 98–118 (MLSS…AEVV), 153–169 (GWST…CIQF), 194–214 (AICG…LDFL), and 252–272 (MWIS…HSLL).

It belongs to the mitochondrial carrier (TC 2.A.29) family.

Its subcellular location is the mitochondrion inner membrane. In Saccharomyces cerevisiae (strain ATCC 204508 / S288c) (Baker's yeast), this protein is Putative mitochondrial carrier protein PET8 (PET8).